We begin with the raw amino-acid sequence, 184 residues long: Putative manganese efflux pump MntP (184 aa).

The next 6 membrane-spanning stretches (helical) occupy residues 5 to 25 (LISIIIIAIALAMDAFSVSLT), 38 to 58 (ILYYGLFFGFFQFIMPVIGYI), 67 to 87 (VSTVAPWIAFFLLLAIGLNMI), 107 to 127 (LTLLAVATSIDAFAVGITFAL), 133 to 153 (LLPCTIIGIVAFIFSISGIFI), and 164 to 184 (KFEILGGAVLILIGIKILLGY).

It belongs to the MntP (TC 9.B.29) family.

The protein localises to the cell membrane. Probably functions as a manganese efflux pump. The sequence is that of Putative manganese efflux pump MntP from Methanobrevibacter smithii (strain ATCC 35061 / DSM 861 / OCM 144 / PS).